An 856-amino-acid polypeptide reads, in one-letter code: Phospholipase D gamma 2 (856 aa).

The C2 domain maps to 21–161 (PLATSSGSLM…CSGNRIEGLF (141 aa)). Asp223 is a Ca(2+) binding site. Positions 362-397 (TIYTHHQKTMIVDAEAAQNRRKIVAFVGGLDLCNGR) constitute a PLD phosphodiesterase 1 domain. Active-site residues include His367, Lys369, and Asp374. His367 is a binding site for a 1,2-diacyl-sn-glycero-3-phosphate. Residues His403 and His435 each coordinate Ca(2+). Positions 562 and 707 each coordinate a 1,2-diacyl-sn-glycero-3-phosphate. The 28-residue stretch at 702–729 (FMIYVHSKGMVVDDEFVLIGSANINQRS) folds into the PLD phosphodiesterase 2 domain. Active-site residues include His707, Lys709, and Asp714. Position 770 (Glu770) interacts with Ca(2+).

It belongs to the phospholipase D family. C2-PLD subfamily. Ca(2+) is required as a cofactor. In terms of tissue distribution, highly expressed in roots and flowers, moderately in stems, leaves and seedlings and low in siliques. Not detected in seeds.

It is found in the cytoplasm. Its subcellular location is the membrane. The catalysed reaction is a 1,2-diacyl-sn-glycero-3-phosphocholine + H2O = a 1,2-diacyl-sn-glycero-3-phosphate + choline + H(+). With respect to regulation, inhibited by neomycin. Functionally, hydrolyzes glycerol-phospholipids at the terminal phosphodiesteric bond to generate phosphatidic acids (PA). Plays an important role in various cellular processes, including phytohormone action, vesicular trafficking, secretion, cytoskeletal arrangement, meiosis, tumor promotion, pathogenesis, membrane deterioration and senescence. Can use phosphatidylserine but prefers ethanolamine-containing lipids as substrates. Can use phosphatidylcholine (PC) as substrates in the presence of phosphatidylethanolamine (PE) and PIP2. Involved in membrane lipid modulation under aluminum (Al) stress and negatively modulate plant tolerance to Al. This chain is Phospholipase D gamma 2, found in Arabidopsis thaliana (Mouse-ear cress).